Reading from the N-terminus, the 707-residue chain is Metal transporter CNNM3 (707 aa).

A helical membrane pass occupies residues 11–27 (LGWLFAALCLGNAAGEA). N73 carries an N-linked (GlcNAc...) asparagine glycan. The 179-residue stretch at 130–308 (EAAPPWALGL…DPYSDLSKGV (179 aa)) folds into the CNNM transmembrane domain. 3 helical membrane-spanning segments follow: residues 193-213 (CALGALLLLASLAQAALAVLL), 221-241 (AVPAVLGSAGLVFLVGEVVPA), and 261-281 (LAVLLTLPVALPVGQLLELAA). CBS domains are found at residues 318-379 (LTPL…CTPL) and 386-452 (YNHP…ILDE). A Phosphoserine modification is found at S661. A compositionally biased stretch (polar residues) spans 678-691 (LGEKTTTAAGSSHS). Residues 678–707 (LGEKTTTAAGSSHSRPGVPVEGSPGRNPGV) form a disordered region. S700 carries the post-translational modification Phosphoserine.

It belongs to the ACDP family. In terms of tissue distribution, widely expressed. Expressed at higher level in heart and spleen.

The protein resides in the cell membrane. Functionally, probable metal transporter. This is Metal transporter CNNM3 (CNNM3) from Homo sapiens (Human).